Reading from the N-terminus, the 474-residue chain is Cysteine--tRNA ligase (474 aa).

Cys-28 contacts Zn(2+). The 'HIGH' region motif lies at 30–40 (ITVYDLCHLGH). The Zn(2+) site is built by Cys-209, His-234, and Glu-238. The short motif at 269-273 (KMSKS) is the 'KMSKS' region element. Lys-272 is an ATP binding site.

Belongs to the class-I aminoacyl-tRNA synthetase family. As to quaternary structure, monomer. Requires Zn(2+) as cofactor.

Its subcellular location is the cytoplasm. It catalyses the reaction tRNA(Cys) + L-cysteine + ATP = L-cysteinyl-tRNA(Cys) + AMP + diphosphate. The sequence is that of Cysteine--tRNA ligase from Blochmanniella floridana.